The primary structure comprises 488 residues: Ribosomal RNA small subunit methyltransferase F (488 aa).

Residues 135 to 141, Glu-159, Asp-186, and Asp-204 contribute to the S-adenosyl-L-methionine site; that span reads ASAPGSK. The active-site Nucleophile is the Cys-257.

The protein belongs to the class I-like SAM-binding methyltransferase superfamily. RsmB/NOP family.

Its subcellular location is the cytoplasm. It carries out the reaction cytidine(1407) in 16S rRNA + S-adenosyl-L-methionine = 5-methylcytidine(1407) in 16S rRNA + S-adenosyl-L-homocysteine + H(+). In terms of biological role, specifically methylates the cytosine at position 1407 (m5C1407) of 16S rRNA. This is Ribosomal RNA small subunit methyltransferase F from Shewanella pealeana (strain ATCC 700345 / ANG-SQ1).